The chain runs to 270 residues: Glyoxylate pathway regulator (270 aa).

Residues 1–33 are disordered; the sequence is MNTEIPDLEKQQIDHNSGSDDPQPIHDDMAPVS. Y58 is subject to Phosphotyrosine. S74 bears the Phosphoserine mark. The next 6 helical transmembrane spans lie at 80–100, 109–129, 137–157, 175–195, 198–218, and 227–247; these read PAPLGLSAFALTTLVFSLCTV, SIAVGLALFYGGVCQFAAGMW, FGAAALTSYGGFWMSWAAIEM, AVGIYLFGWFIFTLMLTLCTL, TVAFFGLFFMLMMTFLVLACA, and AIGGGWLGIITAFFGFYNAYA.

Belongs to the acetate uptake transporter (AceTr) (TC 2.A.96) family.

The protein localises to the membrane. In terms of biological role, plays a role in the adaptation of cell metabolism to the utilization of acetic acid, possibly by inhibiting an anion-transporting ATPase and affecting the plasma membrane H(+)-ATPase. May be indirectly involved in the repression of genes encoding glyoxylate cycle enzymes. The polypeptide is Glyoxylate pathway regulator (GPR1) (Yarrowia lipolytica (strain CLIB 122 / E 150) (Yeast)).